Consider the following 774-residue polypeptide: Armadillo-like helical domain-containing protein 4 (774 aa).

The N-terminal stretch at 1–27 (MRGPIVLHICLAFCSLLLFSVATQCLA) is a signal peptide. The Extracellular portion of the chain corresponds to 28-714 (FPKIERRREI…KDKAGYMSGM (687 aa)). Positions 41–52 (HAEKGQSDKMNT) are enriched in basic and acidic residues. Disordered regions lie at residues 41–63 (HAEK…VTSK) and 97–135 (QPGQ…ERIS). N57 is a glycosylation site (N-linked (GlcNAc...) asparagine). N189 is a glycosylation site (N-linked (GlcNAc...) asparagine). Residues 221–233 (KTEKFEADTDHRT) show a composition bias toward basic and acidic residues. 2 disordered regions span residues 221 to 275 (KTEK…QPLE) and 600 to 669 (ASYG…PGLE). The segment covering 258 to 275 (SQMTADNTQAAATKQPLE) has biased composition (polar residues). The segment covering 607-651 (LESEEGQEDEDEEDEEDEDEEEEDEEEDEEDKDADSLDEGLDGDT) has biased composition (acidic residues). Residues 715–735 (LVPVGVGIAGALFILGALYSI) form a helical membrane-spanning segment. At 736–774 (KVMNRRRRNGFKRHKRKQREFNSMQDRVMLLADSSEDEF) the chain is on the cytoplasmic side. A phosphoserine mark is found at S769 and S770.

Interacts with IL6ST; this interaction prevents IL6ST protein homodimerization and bridges ARMH4 with IL6R and STAT3 and therefore inhibits phosphorylation of STAT3 at 'Tyr-705'. Interacts (via cytoplasmic tail) with RICTOR; this interaction bridges ARMH4 to the mTORC2 complex and inhibits the mTORC2 kinase activity. Expressed in podocytes.

The protein localises to the membrane. May modulate immune response and may play a role in inflammation. Down-modulates STAT3 signaling throught direct interaction with IL6ST, resulting in the inhibition of phosphorylation of STAT3 at 'Tyr-705'. May negatively regulates AKT signaling by modulating the activity of mTORC2 complex through RICTOR interaction. In Homo sapiens (Human), this protein is Armadillo-like helical domain-containing protein 4.